The chain runs to 322 residues: Cytochrome c biogenesis protein CcsA (322 aa).

The next 7 membrane-spanning stretches (helical) occupy residues 9 to 29 (IFTH…LITL), 44 to 64 (GMIV…IYSG), 71 to 91 (LYES…VPYF), 143 to 163 (MILS…LLVI), 226 to 246 (VISL…VWAN), 255 to 275 (WDPK…YLHI), and 287 to 307 (AIVA…VNLL).

Belongs to the CcmF/CycK/Ccl1/NrfE/CcsA family. In terms of assembly, may interact with Ccs1.

It localises to the plastid. The protein localises to the chloroplast thylakoid membrane. Functionally, required during biogenesis of c-type cytochromes (cytochrome c6 and cytochrome f) at the step of heme attachment. This is Cytochrome c biogenesis protein CcsA from Lactuca sativa (Garden lettuce).